The primary structure comprises 39 residues: Photosystem II reaction center protein L (39 aa).

The helical transmembrane segment at 18 to 38 (SLYLGLLLVAVLGILFSSYFF) threads the bilayer.

It belongs to the PsbL family. PSII is composed of 1 copy each of membrane proteins PsbA, PsbB, PsbC, PsbD, PsbE, PsbF, PsbH, PsbI, PsbJ, PsbK, PsbL, PsbM, PsbT, PsbX, PsbY, PsbZ, Psb30/Ycf12, peripheral proteins PsbO, CyanoQ (PsbQ), PsbU, PsbV and a large number of cofactors. It forms dimeric complexes.

It is found in the cellular thylakoid membrane. Functionally, one of the components of the core complex of photosystem II (PSII). PSII is a light-driven water:plastoquinone oxidoreductase that uses light energy to abstract electrons from H(2)O, generating O(2) and a proton gradient subsequently used for ATP formation. It consists of a core antenna complex that captures photons, and an electron transfer chain that converts photonic excitation into a charge separation. This subunit is found at the monomer-monomer interface and is required for correct PSII assembly and/or dimerization. In Microcystis aeruginosa (strain NIES-843 / IAM M-2473), this protein is Photosystem II reaction center protein L.